The chain runs to 2293 residues: Protein Ycf2 (2293 aa).

1647 to 1654 (GSIGTGRS) contacts ATP.

Belongs to the Ycf2 family.

The protein resides in the plastid. The protein localises to the chloroplast stroma. Probable ATPase of unknown function. Its presence in a non-photosynthetic plant (Epifagus virginiana) and experiments in tobacco indicate that it has an essential function which is probably not related to photosynthesis. This Lobularia maritima (Sweet alyssum) protein is Protein Ycf2.